Here is a 544-residue protein sequence, read N- to C-terminus: MARFIFITGGVVSSLGKGLMAASLAALLQARGYKVRIRKFDPYLNVDPGTMSPYQHGEVYVTDDGAETDLDLGHYERFTGVPGRQSDNITSGRIYQTIIQKERRGDYLGATVQVIPHVTDAIKEFARADTEGLDFVLCEIGGTVGDIESLPFMEAIRQLRNDLGRGNSIFVHLTLVPYIAAAGELKTKPTQHSVRDLTSLGIQPDVLVCRCDRPLPEGERAKIALFCNVPTEAVIPALDASSIYGVPLQYHEEGLDEAVLSAFGIEAKDEPDLTRWTEIMDRLENPEGEVTIGVVGKYVGLLDAYKSLHEALVHGGIANRVKVNIRWIDAELFEQEEGGIAAQLEPMHAILVPGGFGERGSEGKIAAVRFARERKVPYFGICLGMQMACIEGARNTAGIAAASTTEFGPTDEPVVGMITEWMSEDGLQKREAGGDLGGTMRLGAYDARLSGNSHAATIYGATDISERHRHRYEVNVHYRESLERGGLVFSGMSPDGELPEVVERPDHPWFVGVQFHPELKSKPFDPHPLFASFIAAALQQSRLV.

The tract at residues 1–265 is amidoligase domain; that stretch reads MARFIFITGG…DEAVLSAFGI (265 aa). Ser-13 provides a ligand contact to CTP. Ser-13 is a UTP binding site. 14–19 is a binding site for ATP; that stretch reads SLGKGL. Residue Tyr-54 coordinates L-glutamine. Asp-71 provides a ligand contact to ATP. Residues Asp-71 and Glu-139 each contribute to the Mg(2+) site. CTP contacts are provided by residues 146 to 148, 186 to 191, and Lys-222; these read DIE and KTKPTQ. UTP contacts are provided by residues 186-191 and Lys-222; that span reads KTKPTQ. Positions 291 to 543 constitute a Glutamine amidotransferase type-1 domain; it reads TIGVVGKYVG…IAAALQQSRL (253 aa). Position 355 (Gly-355) interacts with L-glutamine. The Nucleophile; for glutamine hydrolysis role is filled by Cys-382. L-glutamine contacts are provided by residues 383-386, Glu-406, and Arg-471; that span reads LGMQ. Residues His-516 and Glu-518 contribute to the active site.

This sequence belongs to the CTP synthase family. Homotetramer.

It catalyses the reaction UTP + L-glutamine + ATP + H2O = CTP + L-glutamate + ADP + phosphate + 2 H(+). The enzyme catalyses L-glutamine + H2O = L-glutamate + NH4(+). The catalysed reaction is UTP + NH4(+) + ATP = CTP + ADP + phosphate + 2 H(+). The protein operates within pyrimidine metabolism; CTP biosynthesis via de novo pathway; CTP from UDP: step 2/2. Allosterically activated by GTP, when glutamine is the substrate; GTP has no effect on the reaction when ammonia is the substrate. The allosteric effector GTP functions by stabilizing the protein conformation that binds the tetrahedral intermediate(s) formed during glutamine hydrolysis. Inhibited by the product CTP, via allosteric rather than competitive inhibition. Its function is as follows. Catalyzes the ATP-dependent amination of UTP to CTP with either L-glutamine or ammonia as the source of nitrogen. Regulates intracellular CTP levels through interactions with the four ribonucleotide triphosphates. The chain is CTP synthase from Rhizorhabdus wittichii (strain DSM 6014 / CCUG 31198 / JCM 15750 / NBRC 105917 / EY 4224 / RW1) (Sphingomonas wittichii).